Reading from the N-terminus, the 95-residue chain is Aspartyl/glutamyl-tRNA(Asn/Gln) amidotransferase subunit C (95 aa).

It belongs to the GatC family. Heterotrimer of A, B and C subunits.

The catalysed reaction is L-glutamyl-tRNA(Gln) + L-glutamine + ATP + H2O = L-glutaminyl-tRNA(Gln) + L-glutamate + ADP + phosphate + H(+). The enzyme catalyses L-aspartyl-tRNA(Asn) + L-glutamine + ATP + H2O = L-asparaginyl-tRNA(Asn) + L-glutamate + ADP + phosphate + 2 H(+). In terms of biological role, allows the formation of correctly charged Asn-tRNA(Asn) or Gln-tRNA(Gln) through the transamidation of misacylated Asp-tRNA(Asn) or Glu-tRNA(Gln) in organisms which lack either or both of asparaginyl-tRNA or glutaminyl-tRNA synthetases. The reaction takes place in the presence of glutamine and ATP through an activated phospho-Asp-tRNA(Asn) or phospho-Glu-tRNA(Gln). In Syntrophus aciditrophicus (strain SB), this protein is Aspartyl/glutamyl-tRNA(Asn/Gln) amidotransferase subunit C.